The following is a 512-amino-acid chain: 2-isopropylmalate synthase (512 aa).

Residues 4–266 form the Pyruvate carboxyltransferase domain; sequence IEIFDTTLRD…TTKLNLKEIA (263 aa). Residues aspartate 13, histidine 201, histidine 203, and asparagine 237 each contribute to the Mn(2+) site. Residues 390–512 form a regulatory domain region; the sequence is QLESVQLAYG…GEPTPVSATI (123 aa).

The protein belongs to the alpha-IPM synthase/homocitrate synthase family. LeuA type 1 subfamily. As to quaternary structure, homodimer. The cofactor is Mn(2+).

Its subcellular location is the cytoplasm. It catalyses the reaction 3-methyl-2-oxobutanoate + acetyl-CoA + H2O = (2S)-2-isopropylmalate + CoA + H(+). It participates in amino-acid biosynthesis; L-leucine biosynthesis; L-leucine from 3-methyl-2-oxobutanoate: step 1/4. Catalyzes the condensation of the acetyl group of acetyl-CoA with 3-methyl-2-oxobutanoate (2-ketoisovalerate) to form 3-carboxy-3-hydroxy-4-methylpentanoate (2-isopropylmalate). The polypeptide is 2-isopropylmalate synthase (Brevibacillus brevis (strain 47 / JCM 6285 / NBRC 100599)).